The primary structure comprises 5087 residues: Nonribosomal peptide synthetase sidC (5087 aa).

Residues 165–563 (HEMVRHTGNE…NGELQCMGRI (399 aa)) form an adenylation 1 region. The 74-residue stretch at 671 to 744 (EPAGDIEQKI…KMAALVLKSQ (74 aa)) folds into the Carrier 1 domain. Position 705 is an O-(pantetheine 4'-phosphoryl)serine (Ser705). Residues 782-1112 (DIIPCSPIQT…LFDTLFVWQD (331 aa)) are condensation 1. The segment at 1217 to 1611 (ELAKTDSERI…GRRDDLVKIR (395 aa)) is adenylation 2. The Carrier 2 domain maps to 1740–1817 (ENLTDNEAKV…RLTRKISQSI (78 aa)). Ser1777 carries the post-translational modification O-(pantetheine 4'-phosphoryl)serine. The interval 1855 to 2272 (KILPCTSLQE…RVMDFSLVES (418 aa)) is condensation 2. One can recognise a Carrier 3 domain in the interval 2302–2378 (EEWSAESLEI…EIASVLQGSK (77 aa)). Position 2339 is an O-(pantetheine 4'-phosphoryl)serine (Ser2339). The interval 2419–2831 (PCTTPQAGML…STSSSLDTAS (413 aa)) is condensation 3. Positions 2860 to 3258 (ATRHPSRVAL…GRIDDQVKLR (399 aa)) are adenylation 3. The region spanning 3387 to 3464 (TEDTDTIRKI…LLAKAVESPD (78 aa)) is the Carrier 4 domain. Residue Ser3424 is modified to O-(pantetheine 4'-phosphoryl)serine. Residues 3506-3910 (ITPCTSLQDG…RSLVEEPFSN (405 aa)) are condensation 4. The Carrier 5 domain maps to 3943 to 4019 (FQWSQAASLL…TMMAEVTVNG (77 aa)). At Ser3980 the chain carries O-(pantetheine 4'-phosphoryl)serine. Positions 4051 to 4416 (EHIYPATPLQ…EYSICVELEA (366 aa)) are condensation 5. The region spanning 4496–4569 (SLLEERIRDT…KMAEIVNSAR (74 aa)) is the Carrier 6 domain. The residue at position 4530 (Ser4530) is an O-(pantetheine 4'-phosphoryl)serine. Residues 4610–4913 (FLPATAGQVY…IQSDLHEIGS (304 aa)) are condensation 6. The segment at 5013-5048 (DVYKVSPPGSQLSQDSPEKQEANNKPSPQPSVDIEA) is disordered.

This sequence belongs to the NRP synthetase family.

Its pathway is siderophore biosynthesis. Functionally, nonribosomal peptide synthetase; part of the siderophore biosynthetic pathway. Arthroderma benhamiae produces 2 types of extracellular siderophores, ferrichrome C and ferricrocin. The biosynthesis of these siderophores depends on the hydroxylation of ornithine to N(5)-hydroxyornithine, catalyzed by the monooxygenase sidA. The structure of ferricrocin differs from ferrichrome C only by a serine for alanine substitution and the assembly of both siderophores is suggested to be performed by the nonribosomal peptide synthase (NRPS) sidC. This chain is Nonribosomal peptide synthetase sidC, found in Arthroderma benhamiae (strain ATCC MYA-4681 / CBS 112371) (Trichophyton mentagrophytes).